The sequence spans 615 residues: Pentatricopeptide repeat-containing protein At2g25580 (615 aa).

Residues 40–98 form a disordered region; it reads FGNSNDSSEMNPREGYNGRIQNRTGSSGEVSESIHTQSQSLGSNQGRNEQSWKQSPSLS. A compositionally biased stretch (polar residues) spans 58-98; that stretch reads RIQNRTGSSGEVSESIHTQSQSLGSNQGRNEQSWKQSPSLS. 4 PPR repeats span residues 288–318, 319–353, 354–389, and 390–420; these read DLSS…MSEK, NLET…GNIP, DGQL…GIAP, and SIED…MPME. The interval 490–520 is type E(+) motif; it reads SSMQEFRAGDTNLPENDELFQLLRNLKMHMV. Positions 521 to 615 are type DYW motif; the sequence is EVGYVAETRM…NGACTCKDYW (95 aa).

The protein belongs to the PPR family. PCMP-H subfamily.

In Arabidopsis thaliana (Mouse-ear cress), this protein is Pentatricopeptide repeat-containing protein At2g25580 (PCMP-H75).